We begin with the raw amino-acid sequence, 136 residues long: Histone H3 (136 aa).

The segment at 1–43 is disordered; that stretch reads MARTKQTARKNVGGKAPRKHIGQKSARKTASTTAGMKKPHRYR. Position 10 is an N6-methylated lysine (Lys-10). N6-acetyllysine occurs at positions 15 and 24. Basic residues predominate over residues 16–27; sequence APRKHIGQKSAR. N6-methylated lysine occurs at positions 28 and 37.

Belongs to the histone H3 family. The nucleosome is a histone octamer containing two molecules each of H2A, H2B, H3 and H4 assembled in one H3-H4 heterotetramer and two H2A-H2B heterodimers. The octamer wraps approximately 147 bp of DNA.

It localises to the nucleus. The protein resides in the chromosome. Functionally, core component of nucleosome. Nucleosomes wrap and compact DNA into chromatin, limiting DNA accessibility to the cellular machineries which require DNA as a template. Histones thereby play a central role in transcription regulation, DNA repair, DNA replication and chromosomal stability. DNA accessibility is regulated via a complex set of post-translational modifications of histones, also called histone code, and nucleosome remodeling. The polypeptide is Histone H3 (Euplotes crassus).